A 1881-amino-acid chain; its full sequence is Endoribonuclease Dicer-S (1881 aa).

In terms of domain architecture, Helicase ATP-binding spans 41 to 217 (LLEAALDHNI…DLEEKIQNLE (177 aa)). An ATP-binding site is contributed by 54-61 (LNSGSGKT). The DECH box motif lies at 165-168 (DECH). The region spanning 425-594 (SFPSPFTNIL…SMDCGNTESE (170 aa)) is the Helicase C-terminal domain. The Dicer dsRNA-binding fold domain maps to 622–714 (AIGHINRYCA…MPVGKETVKY (93 aa)). The 148-residue stretch at 887–1034 (KFVEDIEKSE…LVPELCAIHP (148 aa)) folds into the PAZ domain. RNase III domains are found at residues 1249-1380 (TSDI…ETSG) and 1625-1783 (FENF…MDSG). Glutamate 1293, aspartate 1371, glutamate 1374, glutamate 1664, aspartate 1769, and glutamate 1772 together coordinate Mg(2+). Positions 1808-1873 (VPRSPVRELL…ARRALRSLKA (66 aa)) constitute a DRBM domain.

This sequence belongs to the helicase family. Dicer subfamily. Component of the RISC loading complex (RLC), or micro-RNA (miRNA) loading complex (miRLC), which is composed of dicer1, ago2 and tarbp2; dicer1 and tarbp2 are required to process precursor miRNAs (pre-miRNAs) to mature miRNAs and then load them onto ago2. Note that the trimeric RLC/miRLC is also referred to as RISC. Requires Mg(2+) as cofactor. The cofactor is Mn(2+).

It localises to the cytoplasm. The enzyme catalyses Endonucleolytic cleavage to 5'-phosphomonoester.. Double-stranded RNA (dsRNA) endoribonuclease playing a central role in short dsRNA-mediated post-transcriptional gene silencing. Cleaves naturally occurring long dsRNAs and short hairpin pre-microRNAs (miRNA) into fragments of twenty-one to twenty-three nucleotides with 3' overhang of two nucleotides, producing respectively short interfering RNAs (siRNA) and mature microRNAs. SiRNAs and miRNAs serve as guide to direct the RNA-induced silencing complex (RISC) to complementary RNAs to degrade them or prevent their translation. Gene silencing mediated by siRNAs, also called RNA interference, controls the elimination of transcripts from mobile and repetitive DNA elements of the genome but also the degradation of exogenous RNA of viral origin for instance. The miRNA pathway on the other side is a mean to specifically regulate the expression of target genes. During embryonic development, at the left-right organizer, post-transcriptionally regulates the expression of dand5 in flow sensor cells. In post-flow stages, acts along with Bicc1 to repress dand5 mRNA translation and decay. Decreased Dand5 expression lifts repression of Nodal and defines leftness by induction of the lateral plate mesoderm Nodal signaling cascade. In Xenopus laevis (African clawed frog), this protein is Endoribonuclease Dicer-S (dicer1.S).